Reading from the N-terminus, the 144-residue chain is PE family protein PE9 (144 aa).

One can recognise a PE domain in the interval 1-87; it reads MSYMIATPAA…RTLTGGCGVF (87 aa). The segment at 98 to 124 is disordered; it reads AAEHRAAGAGRRQRRRRSGDGQWRLRQ.

It belongs to the mycobacterial PE family. As to quaternary structure, forms a complex with PE10. The complex interacts with human TLR4.

The protein resides in the secreted. It localises to the cell wall. Its subcellular location is the cell surface. In terms of biological role, together with PE10, induces macrophage apoptosis through human Toll-like receptor 4 (TLR4) signaling pathway. Interaction with TLR4 leads to increased levels of phospho-IRF-3, increase in the transcript levels of IFN-beta and pro-apoptotic genes, up-regulation of IL-10, down-regulation of IL-1b and enhanced levels of macrophage apoptosis. The chain is PE family protein PE9 from Mycobacterium tuberculosis (strain ATCC 25618 / H37Rv).